The following is a 313-amino-acid chain: MKKLNIIFAGTPDISAQVLKDLYKSQHNIQAVLTQPDRAKGRGKKVQFSPVKEVALANHTPVFQPLSFKKNPEVLEQIKQLKPDVIVVIAYGIIVPQEFLDIPRYGCLNIHVSLLPKWRGAAPIQRAIQAGDTKTGVCIMQMDAGLDTGDILNTLEIEIQETDTSQTLHDKFAKLSIKPLLETLEKIEIIKPEPQQGEPTYAHKITKQEGLIDFTKSAWQISCHIRAFTPWPGAYFILDDEAIKVGEFEILYQNTDNRKAGTIIDIYRSGFDIATSDKIIRFRQLQFPNKKMLNIVDILNGKDLDKYIGYKLG.

Residue 113–116 participates in (6S)-5,6,7,8-tetrahydrofolate binding; it reads SLLP.

The protein belongs to the Fmt family.

It catalyses the reaction L-methionyl-tRNA(fMet) + (6R)-10-formyltetrahydrofolate = N-formyl-L-methionyl-tRNA(fMet) + (6S)-5,6,7,8-tetrahydrofolate + H(+). In terms of biological role, attaches a formyl group to the free amino group of methionyl-tRNA(fMet). The formyl group appears to play a dual role in the initiator identity of N-formylmethionyl-tRNA by promoting its recognition by IF2 and preventing the misappropriation of this tRNA by the elongation apparatus. This Francisella tularensis subsp. tularensis (strain FSC 198) protein is Methionyl-tRNA formyltransferase.